The following is a 92-amino-acid chain: MARSLKKGPFVADHLLSKVEALNARGERQVIKTWSRASTILPQMIGHTIAVHNGRQHVPVYVTEQMVGHKLGEFAPTRTFRSHTKGDKKARY.

It belongs to the universal ribosomal protein uS19 family.

In terms of biological role, protein S19 forms a complex with S13 that binds strongly to the 16S ribosomal RNA. This is Small ribosomal subunit protein uS19 from Cyanothece sp. (strain PCC 7425 / ATCC 29141).